A 379-amino-acid chain; its full sequence is uncharacterized protein (379 aa).

It belongs to the mimivirus L17x/L18x family.

This is an uncharacterized protein from Acanthamoeba polyphaga mimivirus (APMV).